Consider the following 279-residue polypeptide: Phosphatidylglycerol--prolipoprotein diacylglyceryl transferase (279 aa).

Transmembrane regions (helical) follow at residues 18–38 (LSVRWYGIIIAVGILLGYFVA), 55–75 (IIFYSALFGFIAARIYFVIFQ), and 89–109 (IWHGGIAIHGGLIGGFIAGVI). Arginine 137 contributes to the a 1,2-diacyl-sn-glycero-3-phospho-(1'-sn-glycerol) binding site. 2 helical membrane passes run 203–223 (LGETFFLYLTWYSIGRFFIEG) and 235–255 (IRVAQLVSILLILISISLIVY).

This sequence belongs to the Lgt family.

The protein resides in the cell membrane. The enzyme catalyses L-cysteinyl-[prolipoprotein] + a 1,2-diacyl-sn-glycero-3-phospho-(1'-sn-glycerol) = an S-1,2-diacyl-sn-glyceryl-L-cysteinyl-[prolipoprotein] + sn-glycerol 1-phosphate + H(+). The protein operates within protein modification; lipoprotein biosynthesis (diacylglyceryl transfer). In terms of biological role, catalyzes the transfer of the diacylglyceryl group from phosphatidylglycerol to the sulfhydryl group of the N-terminal cysteine of a prolipoprotein, the first step in the formation of mature lipoproteins. In Staphylococcus aureus (strain USA300), this protein is Phosphatidylglycerol--prolipoprotein diacylglyceryl transferase.